Reading from the N-terminus, the 189-residue chain is Chitin synthase 2 (189 aa).

This sequence belongs to the chitin synthase family. Class II subfamily.

It is found in the cell membrane. The catalysed reaction is [(1-&gt;4)-N-acetyl-beta-D-glucosaminyl](n) + UDP-N-acetyl-alpha-D-glucosamine = [(1-&gt;4)-N-acetyl-beta-D-glucosaminyl](n+1) + UDP + H(+). Polymerizes chitin, a structural polymer of the cell wall and septum, by transferring the sugar moiety of UDP-GlcNAc to the non-reducing end of the growing chitin polymer. This is Chitin synthase 2 (chs2) from Aspergillus niger.